A 760-amino-acid chain; its full sequence is Catalase-peroxidase (760 aa).

The disordered stretch occupies residues 1 to 22 (MSQGECPVKKVPNVAGSGTRNT). Positions 93 to 242 (WHSAGTYRVT…LAAAHMGLIY (150 aa)) form a cross-link, tryptophyl-tyrosyl-methioninium (Trp-Tyr) (with M-268). Histidine 94 acts as the Proton acceptor in catalysis. Positions 206 to 226 (KGEGIMDGDQHKTDKSEPHTS) are disordered. Over residues 213–226 (GDQHKTDKSEPHTS) the composition is skewed to basic and acidic residues. A cross-link (tryptophyl-tyrosyl-methioninium (Tyr-Met) (with W-93)) is located at residues 242 to 268 (YVNPEGPEGIPDPVAAAHDIRTTFGRM). Histidine 283 contacts heme b.

Belongs to the peroxidase family. Peroxidase/catalase subfamily. Homodimer or homotetramer. Heme b is required as a cofactor. In terms of processing, formation of the three residue Trp-Tyr-Met cross-link is important for the catalase, but not the peroxidase activity of the enzyme.

The protein resides in the cytoplasm. The catalysed reaction is H2O2 + AH2 = A + 2 H2O. The enzyme catalyses 2 H2O2 = O2 + 2 H2O. Bifunctional enzyme with both catalase and broad-spectrum peroxidase activity. The polypeptide is Catalase-peroxidase (Pyrenophora tritici-repentis (strain Pt-1C-BFP) (Wheat tan spot fungus)).